The chain runs to 309 residues: Protein FdhE (309 aa).

The protein belongs to the FdhE family.

Its subcellular location is the cytoplasm. Its function is as follows. Necessary for formate dehydrogenase activity. The protein is Protein FdhE of Escherichia coli O9:H4 (strain HS).